Here is a 293-residue protein sequence, read N- to C-terminus: Nucleotide-binding protein BcerKBAB4_4948 (293 aa).

Residue 14-21 (GMSGAGKT) participates in ATP binding. 65 to 68 (DLRG) is a GTP binding site.

It belongs to the RapZ-like family.

Its function is as follows. Displays ATPase and GTPase activities. The chain is Nucleotide-binding protein BcerKBAB4_4948 from Bacillus mycoides (strain KBAB4) (Bacillus weihenstephanensis).